The chain runs to 156 residues: Small ribosomal subunit protein uS7 (156 aa).

It belongs to the universal ribosomal protein uS7 family. As to quaternary structure, part of the 30S ribosomal subunit. Contacts proteins S9 and S11.

Functionally, one of the primary rRNA binding proteins, it binds directly to 16S rRNA where it nucleates assembly of the head domain of the 30S subunit. Is located at the subunit interface close to the decoding center, probably blocks exit of the E-site tRNA. This chain is Small ribosomal subunit protein uS7, found in Carsonella ruddii (strain PV).